A 968-amino-acid polypeptide reads, in one-letter code: Putative pectinesterase/pectinesterase inhibitor 26 (968 aa).

A helical transmembrane segment spans residues 33–53 (IGISVAVLVAIIISSTVTIAI). The tract at residues 71-230 (LTPAASLKTV…TEFTSNSLAI (160 aa)) is pectinesterase inhibitor 26 A. 10 N-linked (GlcNAc...) asparagine glycosylation sites follow: asparagine 101, asparagine 158, asparagine 219, asparagine 295, asparagine 352, asparagine 400, asparagine 464, asparagine 541, asparagine 559, and asparagine 603. Residues 265-430 (LTPAASLRNV…RKFTSNSLAI (166 aa)) form a pectinesterase inhibitor 26 B region. The pectinesterase inhibitor 26 C stretch occupies residues 453 to 614 (PTPSSVLRTV…TEFTSNSLAI (162 aa)). The tract at residues 660–954 (HVTVAADGSG…FTVKYFLRGD (295 aa)) is pectinesterase 26. Threonine 735 provides a ligand contact to substrate. Asparagine 737 is a glycosylation site (N-linked (GlcNAc...) asparagine). Residue glutamine 765 coordinates substrate. Aspartate 788 functions as the Proton donor; for pectinesterase activity in the catalytic mechanism. Cysteine 802 and cysteine 822 are disulfide-bonded. The Nucleophile; for pectinesterase activity role is filled by aspartate 809. N-linked (GlcNAc...) asparagine glycosylation occurs at asparagine 863. 2 residues coordinate substrate: arginine 872 and tryptophan 874. N-linked (GlcNAc...) asparagine glycosylation is present at asparagine 900.

This sequence in the N-terminal section; belongs to the PMEI family. It in the C-terminal section; belongs to the pectinesterase family. As to expression, expressed in flowers.

It is found in the membrane. It catalyses the reaction [(1-&gt;4)-alpha-D-galacturonosyl methyl ester](n) + n H2O = [(1-&gt;4)-alpha-D-galacturonosyl](n) + n methanol + n H(+). The protein operates within glycan metabolism; pectin degradation; 2-dehydro-3-deoxy-D-gluconate from pectin: step 1/5. In terms of biological role, acts in the modification of cell walls via demethylesterification of cell wall pectin. This Arabidopsis thaliana (Mouse-ear cress) protein is Putative pectinesterase/pectinesterase inhibitor 26 (PME26).